The following is a 353-amino-acid chain: Photosystem II protein D1 (353 aa).

The residue at position 2 (T2) is an N-acetylthreonine. A Phosphothreonine modification is found at T2. Helical transmembrane passes span 29 to 46 (YIGW…TATS), 118 to 133 (HFFI…EWEL), and 142 to 156 (WIAV…AATA). H118 lines the chlorophyll a pocket. Position 126 (Y126) interacts with pheophytin a. [CaMn4O5] cluster contacts are provided by D170 and E189. A helical transmembrane segment spans residues 197–218 (FHMLGVAGVFGGSLFSAMHGSL). H198 contributes to the chlorophyll a binding site. A quinone contacts are provided by residues H215 and 264–265 (SF). Position 215 (H215) interacts with Fe cation. Fe cation is bound at residue H272. The helical transmembrane segment at 274-288 (FLAAWPVIGIWFTAL) threads the bilayer. [CaMn4O5] cluster-binding residues include H332, E333, D342, and A344. The propeptide occupies 345 to 353 (AFEAPSINA).

The protein belongs to the reaction center PufL/M/PsbA/D family. As to quaternary structure, PSII is composed of 1 copy each of membrane proteins PsbA, PsbB, PsbC, PsbD, PsbE, PsbF, PsbH, PsbI, PsbJ, PsbK, PsbL, PsbM, PsbT, PsbX, PsbY, PsbZ, Psb30/Ycf12, at least 3 peripheral proteins of the oxygen-evolving complex and a large number of cofactors. It forms dimeric complexes. The cofactor is The D1/D2 heterodimer binds P680, chlorophylls that are the primary electron donor of PSII, and subsequent electron acceptors. It shares a non-heme iron and each subunit binds pheophytin, quinone, additional chlorophylls, carotenoids and lipids. D1 provides most of the ligands for the Mn4-Ca-O5 cluster of the oxygen-evolving complex (OEC). There is also a Cl(-1) ion associated with D1 and D2, which is required for oxygen evolution. The PSII complex binds additional chlorophylls, carotenoids and specific lipids.. Post-translationally, tyr-161 forms a radical intermediate that is referred to as redox-active TyrZ, YZ or Y-Z. C-terminally processed by CTPA; processing is essential to allow assembly of the oxygen-evolving complex and thus photosynthetic growth.

It is found in the plastid. Its subcellular location is the chloroplast thylakoid membrane. The catalysed reaction is 2 a plastoquinone + 4 hnu + 2 H2O = 2 a plastoquinol + O2. Photosystem II (PSII) is a light-driven water:plastoquinone oxidoreductase that uses light energy to abstract electrons from H(2)O, generating O(2) and a proton gradient subsequently used for ATP formation. It consists of a core antenna complex that captures photons, and an electron transfer chain that converts photonic excitation into a charge separation. The D1/D2 (PsbA/PsbD) reaction center heterodimer binds P680, the primary electron donor of PSII as well as several subsequent electron acceptors. In Chlamydomonas moewusii (Chlamydomonas eugametos), this protein is Photosystem II protein D1.